Here is a 290-residue protein sequence, read N- to C-terminus: Probable prolyl 4-hydroxylase 8 (290 aa).

The Cytoplasmic segment spans residues 1-19 (MAKKPKQLRNKPRKSFSTQ). Residues 20-40 (TFTVVVLVLFVILILVGLGIF) form a helical; Signal-anchor for type II membrane protein membrane-spanning segment. Over 41 to 290 (SLPSTNKTSS…TKWFHVHEYN (250 aa)) the chain is Lumenal. Asparagine 46 is a glycosylation site (N-linked (GlcNAc...) asparagine). The Fe2OG dioxygenase domain occupies 163-286 (NGEGLQVLHY…KWSSTKWFHV (124 aa)). 2 residues coordinate Fe cation: histidine 181 and aspartate 183. N-linked (GlcNAc...) asparagine glycosylation is present at asparagine 222. Position 267 (histidine 267) interacts with Fe cation. Lysine 277 contacts 2-oxoglutarate.

The protein belongs to the P4HA family. Fe(2+) serves as cofactor. The cofactor is L-ascorbate.

It localises to the endoplasmic reticulum membrane. The catalysed reaction is L-prolyl-[collagen] + 2-oxoglutarate + O2 = trans-4-hydroxy-L-prolyl-[collagen] + succinate + CO2. Catalyzes the post-translational formation of 4-hydroxyproline in -Xaa-Pro-Gly- sequences in proline-rich peptide sequences of plant glycoproteins and other proteins. Hydroxyprolines are important constituent of many plant cell wall glycoproteins such as extensins, hydroxyproline-rich glycoproteins, lectins and arabinogalactan proteins. The chain is Probable prolyl 4-hydroxylase 8 from Arabidopsis thaliana (Mouse-ear cress).